Consider the following 375-residue polypeptide: tRNA-specific 2-thiouridylase MnmA (375 aa).

Residues 16-23 (GMSGGVDS) and M42 each bind ATP. The tract at residues 102-104 (NPD) is interaction with target base in tRNA. C107 acts as the Nucleophile in catalysis. C107 and C203 are disulfide-bonded. G131 provides a ligand contact to ATP. The segment at 153-155 (KDQ) is interaction with tRNA. C203 serves as the catalytic Cysteine persulfide intermediate. The tract at residues 315–316 (RY) is interaction with tRNA.

It belongs to the MnmA/TRMU family.

It localises to the cytoplasm. The catalysed reaction is S-sulfanyl-L-cysteinyl-[protein] + uridine(34) in tRNA + AH2 + ATP = 2-thiouridine(34) in tRNA + L-cysteinyl-[protein] + A + AMP + diphosphate + H(+). Functionally, catalyzes the 2-thiolation of uridine at the wobble position (U34) of tRNA, leading to the formation of s(2)U34. In Pseudomonas paraeruginosa (strain DSM 24068 / PA7) (Pseudomonas aeruginosa (strain PA7)), this protein is tRNA-specific 2-thiouridylase MnmA.